The sequence spans 132 residues: Subtelomeric hrmA-associated cluster protein AFUB_079000 (132 aa).

Its function is as follows. Part of the subtelomeric hrmA-associated cluster (HAC) containing genes that alter the hyphal surface (such as reduced total chitin or increased beta-glucan exposure) and perturb inter-hyphal interactions within the developing biofilms, resulting in a loss of vertically aligned polarized growing filaments. Consequently, this hypoxia-typic morphotype (called H-MORPH) with altered biofilm architecture leads to increased hypoxia fitness, increased host inflammation, rapid disease progression, and mortality in a murine model of invasive aspergillosis. The protein is Subtelomeric hrmA-associated cluster protein AFUB_079000 of Aspergillus fumigatus (strain CBS 144.89 / FGSC A1163 / CEA10) (Neosartorya fumigata).